The primary structure comprises 536 residues: MDITASFLQDLVENKKAVPKIFSKTTLSNETSAKLFPYQKNHVLNLISILLKYFLVLDTSDTGVGKTYMAAAACRELGRKPIIVCPKTLIPNWASVLEFYGVKYYDIVNYETLKNEKTYKDSNFRVRKRCPYIKKVDNDGDYLKPAFEWKVPRNAIIIFDESHRCKDPSTENGKLLMSSKQLIQQNIPVMLLSATICESYSDMKIPFYLMNFIPHTRNFNEFVRTLKTKYPEYRVRNRQLDQAERKIAVENAQTLIIFKEIKEYTSRIRIRDLGNQFPDNQWCAQQFLSDDSDKIAEAYEEIAELMRELEEKKTQCKNHLAKIQKLKQEIELRKIPIFIEQTQLYLEQGKSVIIFVNYINTMNILSAQLNIKCRICGDQTQDQRQESIALFQANIEKIIICQIRAGGVGISLHDLHGGHPRVTLLNFPDSASDLLQALGRAPRSGAKSPVLQRIILVANVEYEKNIMRSINKKLANISAINDGDLEGHKYQVNEGRRRQRRVLNEPVNNPIEEPVNDPVKDPVEDLTDNQPNIVEV.

Residues 47–214 (ISILLKYFLV…IPFYLMNFIP (168 aa)) enclose the Helicase ATP-binding domain. 60–67 (SDTGVGKT) is an ATP binding site. The DEAH box motif lies at 160–163 (DESH). Residues 288–334 (LSDDSDKIAEAYEEIAELMRELEEKKTQCKNHLAKIQKLKQEIELRK) are a coiled coil. The 149-residue stretch at 338–486 (FIEQTQLYLE…ISAINDGDLE (149 aa)) folds into the Helicase C-terminal domain. The segment at 502-536 (VLNEPVNNPIEEPVNDPVKDPVEDLTDNQPNIVEV) is disordered.

The protein belongs to the DEAD box helicase family. DEAH subfamily.

It carries out the reaction ATP + H2O = ADP + phosphate + H(+). This is Putative ATP-dependent RNA helicase L364 from Acanthamoeba polyphaga (Amoeba).